The sequence spans 220 residues: Iron-sulfur cluster repair protein YtfE (220 aa).

The protein belongs to the RIC family. YtfE subfamily. Homodimer.

It is found in the cytoplasm. Di-iron-containing protein involved in the repair of iron-sulfur clusters damaged by oxidative and nitrosative stress conditions. This chain is Iron-sulfur cluster repair protein YtfE, found in Shigella boydii serotype 4 (strain Sb227).